Reading from the N-terminus, the 54-residue chain is UPF0391 membrane protein Mpe_A2904 (54 aa).

2 helical membrane-spanning segments follow: residues 5–25 and 30–50; these read AVVFFIIALIAAVFGFGGIAA and IAKILFFVFVVLAVASFLFGL.

Belongs to the UPF0391 family.

It is found in the cell membrane. This Methylibium petroleiphilum (strain ATCC BAA-1232 / LMG 22953 / PM1) protein is UPF0391 membrane protein Mpe_A2904.